The sequence spans 177 residues: Phycocyanin-645 beta chain (177 aa).

Residue Tyr-18 coordinates mesobiliverdin. (2R,3E)-phycocyanobilin is bound by residues Lys-28, Asn-35, and Asp-39. 15,16-dihydrobiliverdin-binding residues include Cys-50, Asp-54, and Cys-61. The (2R,3E)-phycocyanobilin site is built by Arg-77, Cys-82, Arg-84, and Asp-85. Gln-148 is a 15,16-dihydrobiliverdin binding site. Positions 154, 156, and 158 each coordinate (2R,3E)-phycocyanobilin.

Belongs to the phycobiliprotein family. As to quaternary structure, heterotetramer of 2 different alpha chains and 2 identical beta chains which form 2 alpha-beta heterodimers within the heterotetramer. Post-translationally, contains two phycocyanobilin chromophores, one mesobiliverdin chromophore and one 15,16-dihydrobiliverdin chromophore with binding mediated by both the alpha and beta subunits.

It localises to the plastid. Its subcellular location is the chloroplast thylakoid membrane. Functionally, light-harvesting photosynthetic tetrapyrrole chromophore-protein from the phycobiliprotein complex. This Chroomonas sp protein is Phycocyanin-645 beta chain.